The following is a 164-amino-acid chain: Large ribosomal subunit protein uL15 (164 aa).

Disordered stretches follow at residues 1–49 (MTKL…SIAG) and 143–164 (EKAGGKLTTTKPEAAQDASAEA). Residues 22–36 (RGPGSGKGKTAGRGV) show a composition bias toward gly residues.

The protein belongs to the universal ribosomal protein uL15 family. In terms of assembly, part of the 50S ribosomal subunit.

Its function is as follows. Binds to the 23S rRNA. The polypeptide is Large ribosomal subunit protein uL15 (Phenylobacterium zucineum (strain HLK1)).